The chain runs to 301 residues: Diaminopimelate epimerase (301 aa).

The substrate site is built by asparagine 15, glutamine 47, and asparagine 67. Residue cysteine 76 is the Proton donor of the active site. Substrate contacts are provided by residues 77–78 (GN), asparagine 163, asparagine 197, and 215–216 (ER). The active-site Proton acceptor is cysteine 224. Position 225–226 (225–226 (GS)) interacts with substrate.

It belongs to the diaminopimelate epimerase family. As to quaternary structure, homodimer.

It is found in the cytoplasm. The enzyme catalyses (2S,6S)-2,6-diaminopimelate = meso-2,6-diaminopimelate. The protein operates within amino-acid biosynthesis; L-lysine biosynthesis via DAP pathway; DL-2,6-diaminopimelate from LL-2,6-diaminopimelate: step 1/1. Its function is as follows. Catalyzes the stereoinversion of LL-2,6-diaminopimelate (L,L-DAP) to meso-diaminopimelate (meso-DAP), a precursor of L-lysine and an essential component of the bacterial peptidoglycan. The sequence is that of Diaminopimelate epimerase from Rhizobium rhizogenes (strain K84 / ATCC BAA-868) (Agrobacterium radiobacter).